The sequence spans 145 residues: MRYLLLTFFTFHCQMVADALPRAKRLRLLREAKARKESGEGKIEEAGMIVTTGAPTPENETMEHNEVPQSTTDTDQKSEEIVEKIAQVQEEGANTEDESDEELLNLAPKRANWDMERDIAPMLRKLERRTQHAIVEILRTCDLKQ.

The N-terminal stretch at 1-19 (MRYLLLTFFTFHCQMVADA) is a signal peptide. Residues 27 to 30 (RLLR) carry the RxLR motif. Residues 38-77 (SGEGKIEEAGMIVTTGAPTPENETMEHNEVPQSTTDTDQK) are disordered. N-linked (GlcNAc...) asparagine glycosylation occurs at Asn59.

The protein belongs to the RxLR effector family.

It localises to the secreted. The protein resides in the host nucleus. In terms of biological role, secreted effector that dos not suppress the host cell death induced by cell death-inducing proteins. This is Secreted RxLR effector protein 100 from Plasmopara viticola (Downy mildew of grapevine).